A 302-amino-acid chain; its full sequence is Sulfate adenylyltransferase subunit 2 (302 aa).

It belongs to the PAPS reductase family. CysD subfamily. Heterodimer composed of CysD, the smaller subunit, and CysN.

The catalysed reaction is sulfate + ATP + H(+) = adenosine 5'-phosphosulfate + diphosphate. Its pathway is sulfur metabolism; hydrogen sulfide biosynthesis; sulfite from sulfate: step 1/3. In terms of biological role, with CysN forms the ATP sulfurylase (ATPS) that catalyzes the adenylation of sulfate producing adenosine 5'-phosphosulfate (APS) and diphosphate, the first enzymatic step in sulfur assimilation pathway. APS synthesis involves the formation of a high-energy phosphoric-sulfuric acid anhydride bond driven by GTP hydrolysis by CysN coupled to ATP hydrolysis by CysD. The protein is Sulfate adenylyltransferase subunit 2 of Shewanella pealeana (strain ATCC 700345 / ANG-SQ1).